Here is a 192-residue protein sequence, read N- to C-terminus: Leucine-rich repeat-containing protein 51 (192 aa).

LRR repeat units lie at residues 49-71, 80-101, and 103-124; these read SLTQ…NQVV, NLAW…LTTF, and NLSV…NKLA. An LRRCT domain is found at 137-175; it reads NPIEEEKGYRQYVLCNLPRITTFDFSGVTRADRSTAEVW.

In terms of tissue distribution, widely expressed in adult and embryonic tissues. Expressed in the developing choroid plexus from 12.5 dpc and in the epithelium of the developing airway tract from 14.5 dpc. Also expressed in the postnatal inner ear.

It localises to the cytoplasm. The polypeptide is Leucine-rich repeat-containing protein 51 (Mus musculus (Mouse)).